The sequence spans 408 residues: MINALKGMKDLQDDQATLYEKVVKTCEEVAKNYGFTFINCPHLELTKLFKRSVGESSDIVGKEMYEFVDKAGNDVCLRPEGTAGVVRSYIEAKMDKNQSVKRWFYHGSMFRYERPQKGRLREFHQFGVESFGVESVYEDASIILMLDEIFKRLKIHTNLKINSLGCKECMGVYKEKLIAFLNSKDGFCEDCLRRKELNPIRVLDCKNDHCQNLIKNAPKLSENLCPCCKKDYEKLQKILSENGIEFECDEKLVRGLDYYSKSAFEFISDEIGAKAAVAGGGRYDRLIEYLDGKSGYGVGFAMGIERIMAILEQKQDIKKRNGIYLCAMDEAYIDTIFKLANTLRKKHKVYLSYEAKKLAKHLNQADNANAKIFLCIGEDEMQKEEIFYKNLDTKENKNIKIANLENEL.

This sequence belongs to the class-II aminoacyl-tRNA synthetase family. In terms of assembly, homodimer.

Its subcellular location is the cytoplasm. The enzyme catalyses tRNA(His) + L-histidine + ATP = L-histidyl-tRNA(His) + AMP + diphosphate + H(+). This is Histidine--tRNA ligase from Campylobacter lari (strain RM2100 / D67 / ATCC BAA-1060).